The primary structure comprises 836 residues: Serine/threonine-protein kinase ppk5 (836 aa).

Disordered stretches follow at residues 1–29 (MVGL…FLSP), 192–214 (INQL…TLSS), 230–307 (CSQF…YKSI), and 328–381 (TPLD…ERQN). 3 stretches are compositionally biased toward polar residues: residues 192-205 (INQL…TNYP), 232-241 (QFASPRSSIV), and 265-288 (KPSN…TKLT). A compositionally biased stretch (basic and acidic residues) spans 289–298 (SQRDNDHQKD). Basic residues predominate over residues 338-347 (SGKKFNKNSK). Positions 353-362 (STISSYSSAS) are enriched in low complexity. The region spanning 518–814 (YEIIDTVGKG…VDSALQHEFI (297 aa)) is the Protein kinase domain. Residues 524 to 532 (VGKGSFGQV) and Lys547 each bind ATP. Asp644 acts as the Proton acceptor in catalysis. Tyr678 is subject to Phosphotyrosine.

It belongs to the protein kinase superfamily. CMGC Ser/Thr protein kinase family. MNB/DYRK subfamily.

It is found in the cytoplasm. It catalyses the reaction L-seryl-[protein] + ATP = O-phospho-L-seryl-[protein] + ADP + H(+). It carries out the reaction L-threonyl-[protein] + ATP = O-phospho-L-threonyl-[protein] + ADP + H(+). Has a role in meiosis. This Schizosaccharomyces pombe (strain 972 / ATCC 24843) (Fission yeast) protein is Serine/threonine-protein kinase ppk5 (ppk5).